A 444-amino-acid polypeptide reads, in one-letter code: Acetyl-CoA--deacetylcephalosporin C acetyltransferase (444 aa).

Residues 1 to 71 constitute a propeptide that is removed on maturation; that stretch reads MLPSAQVARL…PQIANRFEAS (71 aa). One can recognise an AB hydrolase-1 domain in the interval 112–425; that stretch reads VIVCHTLTSS…DTNEGHDFFV (314 aa). Active-site residues include Ser-208 and His-421.

Belongs to the AB hydrolase superfamily. MetX family. In terms of assembly, heterodimer of chain I and chain II.

The catalysed reaction is deacetylcephalosporin C + acetyl-CoA = cephalosporin C + CoA. The protein operates within antibiotic biosynthesis; cephalosporin C biosynthesis. In terms of biological role, catalyzes the conversion of deacetylcephalosporin C to cephalosporin C. This chain is Acetyl-CoA--deacetylcephalosporin C acetyltransferase (CEFG), found in Hapsidospora chrysogena (Acremonium chrysogenum).